We begin with the raw amino-acid sequence, 169 residues long: Lutropin/choriogonadotropin subunit beta (169 aa).

Residues 1-20 (MEMLQGLLLWMLLSVGGVWA) form the signal peptide. Disulfide bonds link C29–C77, C43–C92, C46–C130, C54–C108, C58–C110, and C113–C120. N33 is a glycosylation site (N-linked (GlcNAc...) asparagine). Residues 131-169 (APQASSSSKDPPSQPLTSTSTPTPGASNRSSHPLPIKTS) are disordered. Low complexity predominate over residues 145 to 154 (PLTSTSTPTP). Over residues 155–169 (GASNRSSHPLPIKTS) the composition is skewed to polar residues. N158 carries N-linked (GlcNAc...) asparagine glycosylation.

Belongs to the glycoprotein hormones subunit beta family. In terms of assembly, heterodimer of a common alpha chain and a unique beta chain which confers biological specificity to thyrotropin, lutropin, follitropin and gonadotropin.

It localises to the secreted. Its function is as follows. Promotes spermatogenesis and ovulation by stimulating the testes and ovaries to synthesize steroids. This Equus quagga burchellii (Burchell's zebra) protein is Lutropin/choriogonadotropin subunit beta (LHB).